Reading from the N-terminus, the 321-residue chain is Major immediate early protein (321 aa).

Residues 86–139 form an RING-type zinc finger; the sequence is CSVCLETYSQQSNDTCPFLIPTTCDHGFCFKCVINLQSNAMNIPHSTVCCPLCN. A leucine-zipper region spans residues 228 to 249; that stretch reads LIEENTRLNEQIQELQHQVRTL.

The protein localises to the host nucleus. Functionally, plays some regulatory role in both viral DNA replication and transcriptional transactivation. The sequence is that of Major immediate early protein (PE38) from Lepidoptera (butterflies and moths).